The sequence spans 296 residues: Sulfotransferase 1C2 (296 aa).

49–54 (KAGTTW) serves as a coordination point for 3'-phosphoadenylyl sulfate. 107-109 (KTH) is a substrate binding site. Histidine 109 (proton acceptor) is an active-site residue. Residues arginine 131, serine 139, tyrosine 194, and 228–233 (TSFEKM) each bind 3'-phosphoadenylyl sulfate. Serine 139 is subject to Phosphoserine. Residue serine 254 is modified to Phosphoserine. 256–260 (FMRKG) is a 3'-phosphoadenylyl sulfate binding site.

The protein belongs to the sulfotransferase 1 family. In terms of tissue distribution, found in adult stomach, kidney and thyroid gland, and in fetal kidney and liver.

Its subcellular location is the cytoplasm. The protein localises to the lysosome. It localises to the mitochondrion. The enzyme catalyses a phenol + 3'-phosphoadenylyl sulfate = an aryl sulfate + adenosine 3',5'-bisphosphate + H(+). It catalyses the reaction cholesterol + 3'-phosphoadenylyl sulfate = cholesterol sulfate + adenosine 3',5'-bisphosphate + H(+). Its function is as follows. Sulfotransferase that utilizes 3'-phospho-5'-adenylyl sulfate (PAPS) to catalyze the sulfate conjugation of phenolic compounds. Does not transfer sulfate to steroids, dopamine, acetaminophen, or alpha-naphthol. Except in mitochondria, where it can add sulfate to cholesterol producing cholesterol sulfate, which alters mitochondrial membrane organization, and impacts protein complex mobility increasing state-III respiration, thereby modulating mitochondrial respiration. Catalyzes the sulfation of the carcinogenic N-hydroxy-2-acetylaminofluorene leading to highly reactive intermediates capable of forming DNA adducts, potentially resulting in mutagenesis. The sequence is that of Sulfotransferase 1C2 (SULT1C2) from Homo sapiens (Human).